Here is a 320-residue protein sequence, read N- to C-terminus: Delta(7)-sterol 5(6)-desaturase erg3C (320 aa).

3 consecutive transmembrane segments (helical) span residues 43–63 (VISI…FFSA), 91–111 (SSLS…LAEV), and 127–147 (PWLV…IYWI). The Fatty acid hydroxylase domain maps to 134–283 (ILYMAFNDIG…FTWADAYFGS (150 aa)). A Histidine box-1 motif is present at residues 148-152 (HRLEH). A Histidine box-2 motif is present at residues 161-165 (HKPHH). The helical transmembrane segment at 224 to 244 (YMVLFAAVQIWTILIHDGDMI) threads the bilayer. Positions 259-263 (HTLHH) match the Histidine box-3 motif.

Belongs to the sterol desaturase family. Requires Fe cation as cofactor.

It localises to the endoplasmic reticulum membrane. In terms of biological role, delta(7)-sterol 5(6)-desaturase; part of the third module of ergosterol biosynthesis pathway that includes the late steps of the pathway. Erg3C is a minor delta(7)-sterol 5(6)-desaturase within the ergosterol pathway, erg3B being the major one. The third module or late pathway involves the ergosterol synthesis itself through consecutive reactions that mainly occur in the endoplasmic reticulum (ER) membrane. Firstly, the squalene synthase erg9 catalyzes the condensation of 2 farnesyl pyrophosphate moieties to form squalene, which is the precursor of all steroids. Squalene synthase is crucial for balancing the incorporation of farnesyl diphosphate (FPP) into sterol and nonsterol isoprene synthesis. Secondly, squalene is converted into lanosterol by the consecutive action of the squalene epoxidase erg1 and the lanosterol synthase erg7. Then, the delta(24)-sterol C-methyltransferase erg6 methylates lanosterol at C-24 to produce eburicol. Eburicol is the substrate of the sterol 14-alpha demethylase encoded by cyp51A and cyp51B, to yield 4,4,24-trimethyl ergosta-8,14,24(28)-trienol. The C-14 reductase erg24 then reduces the C14=C15 double bond which leads to 4,4-dimethylfecosterol. A sequence of further demethylations at C-4, involving the C-4 demethylation complex containing the C-4 methylsterol oxidases erg25A or erg25B, the sterol-4-alpha-carboxylate 3-dehydrogenase erg26 and the 3-keto-steroid reductase erg27, leads to the production of fecosterol via 4-methylfecosterol. The C-8 sterol isomerase erg2 then catalyzes the reaction which results in unsaturation at C-7 in the B ring of sterols and thus converts fecosterol to episterol. The sterol-C5-desaturase erg3B then catalyzes the introduction of a C-5 double bond in the B ring to produce 5-dehydroepisterol. The 2 other sterol-C5-desaturases, erg3A and erg3C, seem to be less important in ergosterol biosynthesis. The C-22 sterol desaturase erg5 further converts 5-dehydroepisterol into ergosta-5,7,22,24(28)-tetraen-3beta-ol by forming the C-22(23) double bond in the sterol side chain. Finally, ergosta-5,7,22,24(28)-tetraen-3beta-ol is substrate of the C-24(28) sterol reductases erg4A and erg4B to produce ergosterol. Possible alternative sterol biosynthetic pathways might exist from fecosterol to ergosterol, depending on the activities of the erg3 isoforms. This Aspergillus fumigatus (strain ATCC MYA-4609 / CBS 101355 / FGSC A1100 / Af293) (Neosartorya fumigata) protein is Delta(7)-sterol 5(6)-desaturase erg3C.